The sequence spans 524 residues: MLVKVFSFFILMITMVVIGVSKEYCDDKQSCQNFLLELKAGSSSLSEIRRRDLLIIVLKNSVRRIDMVMIGVMDDTKQHEEMENDLLGVKEDTKLFEEMMESTKDRMIRSVEELLGGEFPNRGSYENVHTWLSSVLTSYITCIDEIGEGAYKRRVEPKLEDLISRARIALALFISISPRDNTELISVIPNSPSWLFHVDKKDLYLNAEALKKIADVVVAKDGTGKYSTVNAAIAAAPQHSQKRFVIYIKTGIYDEIVVIENTKPNLTLIGDGQDLTIITSNLSASNVRRTFNTATVASNGNGFIGVDMCFRNTAGPAKGPAVALRVSGDMSVIYRCRVEGYQDALYPHSDRQFYRECFITGTVDFICGNAVAVFQFCQIVARQPKMGQSNVITAQSRAFKDIYSGFTIQKCNITASSDLDTTTVKTYLGRPWRIFSTVAVMQSFIGDLVDPAGWTPWEGETGLSTLHYREYQNRGPGAVTSRRVKWSGFKVMKDPKQATEFTVAKLLDGETWLKETRIPYESGL.

The N-terminal stretch at 1–22 (MLVKVFSFFILMITMVVIGVSK) is a signal peptide. The interval 23 to 172 (EYCDDKQSCQ…ISRARIALAL (150 aa)) is pectinesterase inhibitor 19. Positions 215-510 (DVVVAKDGTG…FTVAKLLDGE (296 aa)) are pectinesterase 19. Residues Asn265 and Asn281 are each glycosylated (N-linked (GlcNAc...) asparagine). Thr290 serves as a coordination point for substrate. The active-site Proton donor; for pectinesterase activity is Asp343. Cys357 and Cys377 are oxidised to a cystine. Asp364 serves as the catalytic Nucleophile; for pectinesterase activity. An N-linked (GlcNAc...) asparagine glycan is attached at Asn412. Residues Arg430 and Trp432 each contribute to the substrate site.

The protein in the N-terminal section; belongs to the PMEI family. This sequence in the C-terminal section; belongs to the pectinesterase family. As to expression, expressed in siliques, but not in flower buds.

The protein resides in the secreted. It localises to the cell wall. The catalysed reaction is [(1-&gt;4)-alpha-D-galacturonosyl methyl ester](n) + n H2O = [(1-&gt;4)-alpha-D-galacturonosyl](n) + n methanol + n H(+). The protein operates within glycan metabolism; pectin degradation; 2-dehydro-3-deoxy-D-gluconate from pectin: step 1/5. Its function is as follows. Acts in the modification of cell walls via demethylesterification of cell wall pectin. The protein is Probable pectinesterase/pectinesterase inhibitor 19 (PME19) of Arabidopsis thaliana (Mouse-ear cress).